Reading from the N-terminus, the 501-residue chain is MPTTVISGFTHNFLGKAPVWYKQVILLFLVINPIVMYLLGPGVAGWLLIGEFIFTLAMALKCYPLLPGGLLAVEALLIGLTSADAVYHEVLTNFPVILLLMFMVAGIYFMKELLLVTFTQILVGVRSKSALSLLFCSAAAVLSAFLDALTVTAVIISVAVGFFSVYHKVASGKGYQQKDHNTNSDDEVIELHREDLENFRAFLRSLLMHGAIGTALGGVATMVGEPQNLLIAKVVGWDFAGFFLHMAPVSIPVLFAGLATCWALEKLRWFGYGGRLPKPVRRVLEEFADNEKARRTKSDQAALWIQAVAAVILVFGLAFHIAEVGLIGLLVIILITSFTGVTDEHQIGKAFQESLPFTSLLVVFFAVVAVIHEQHLFKPIIDYVLALPEGQQPGMFFIANGLLSMISDNVFVATVYISEVKQALDAGSISYEHFQTLAVAINTGTNLPSVATPNGQAAFLFLLTSAIAPLVRLSYGRMVIMALPYTIVMGGVGLYMVTHAF.

Transmembrane regions (helical) follow at residues 24–44, 46–66, 90–110, 145–165, 206–226, 239–259, 302–319, 351–371, 395–415, 450–470, and 478–498; these read VILL…PGVA, WLLI…YPLL, VLTN…IYFM, FLDA…FFSV, LLMH…VGEP, FAGF…AGLA, ALWI…GLAF, FQES…VAVI, MFFI…VATV, VATP…IAPL, and MVIM…YMVT.

It belongs to the NhaB Na(+)/H(+) (TC 2.A.34) antiporter family.

It localises to the cell inner membrane. It carries out the reaction 2 Na(+)(in) + 3 H(+)(out) = 2 Na(+)(out) + 3 H(+)(in). In terms of biological role, na(+)/H(+) antiporter that extrudes sodium in exchange for external protons. The polypeptide is Na(+)/H(+) antiporter NhaB (Marinobacter nauticus (strain ATCC 700491 / DSM 11845 / VT8) (Marinobacter aquaeolei)).